A 275-amino-acid chain; its full sequence is Putative protein A464R (275 aa).

Positions 51–175 (KEDVEYLIGM…LMGAIYFDLG (125 aa)) constitute an RNase III domain. Residues 201–269 (NYKDRLLKHT…SKIALHTMGV (69 aa)) enclose the DRBM domain.

The protein belongs to the ribonuclease III family.

The chain is Putative protein A464R from Chlorella (PBCV-1).